The chain runs to 90 residues: MLKKQFVVYGIVQGVGFRYFTWKKATEIGLNGIVKNQRDGSVYILAEGSASQIDSFRDWLSHGPPSARVDRVEENDYSGTHSFGLFSVEH.

The 88-residue stretch at 3 to 90 (KKQFVVYGIV…HSFGLFSVEH (88 aa)) folds into the Acylphosphatase-like domain. Catalysis depends on residues Arg-18 and Asn-36.

It belongs to the acylphosphatase family.

The catalysed reaction is an acyl phosphate + H2O = a carboxylate + phosphate + H(+). This Mannheimia succiniciproducens (strain KCTC 0769BP / MBEL55E) protein is Acylphosphatase (acyP).